The sequence spans 338 residues: Holliday junction branch migration complex subunit RuvB (338 aa).

The large ATPase domain (RuvB-L) stretch occupies residues 1–180 (MERLLDNKFS…FGIIERLDYY (180 aa)). Residues Leu19, Arg20, Gly61, Lys64, Thr65, Thr66, Arg170, Tyr180, and Arg217 each contribute to the ATP site. Mg(2+) is bound at residue Thr65. Positions 181-251 (TVEELSQIVM…VAKSGLEMFE (71 aa)) are small ATPAse domain (RuvB-S). A head domain (RuvB-H) region spans residues 254–338 (EYGLDLVDRN…FNVKESGDKR (85 aa)). Residues Lys309 and Arg314 each coordinate DNA.

Belongs to the RuvB family. As to quaternary structure, homohexamer. Forms an RuvA(8)-RuvB(12)-Holliday junction (HJ) complex. HJ DNA is sandwiched between 2 RuvA tetramers; dsDNA enters through RuvA and exits via RuvB. An RuvB hexamer assembles on each DNA strand where it exits the tetramer. Each RuvB hexamer is contacted by two RuvA subunits (via domain III) on 2 adjacent RuvB subunits; this complex drives branch migration. In the full resolvosome a probable DNA-RuvA(4)-RuvB(12)-RuvC(2) complex forms which resolves the HJ.

The protein localises to the cytoplasm. It carries out the reaction ATP + H2O = ADP + phosphate + H(+). The RuvA-RuvB-RuvC complex processes Holliday junction (HJ) DNA during genetic recombination and DNA repair, while the RuvA-RuvB complex plays an important role in the rescue of blocked DNA replication forks via replication fork reversal (RFR). RuvA specifically binds to HJ cruciform DNA, conferring on it an open structure. The RuvB hexamer acts as an ATP-dependent pump, pulling dsDNA into and through the RuvAB complex. RuvB forms 2 homohexamers on either side of HJ DNA bound by 1 or 2 RuvA tetramers; 4 subunits per hexamer contact DNA at a time. Coordinated motions by a converter formed by DNA-disengaged RuvB subunits stimulates ATP hydrolysis and nucleotide exchange. Immobilization of the converter enables RuvB to convert the ATP-contained energy into a lever motion, pulling 2 nucleotides of DNA out of the RuvA tetramer per ATP hydrolyzed, thus driving DNA branch migration. The RuvB motors rotate together with the DNA substrate, which together with the progressing nucleotide cycle form the mechanistic basis for DNA recombination by continuous HJ branch migration. Branch migration allows RuvC to scan DNA until it finds its consensus sequence, where it cleaves and resolves cruciform DNA. This is Holliday junction branch migration complex subunit RuvB from Caldicellulosiruptor saccharolyticus (strain ATCC 43494 / DSM 8903 / Tp8T 6331).